Consider the following 325-residue polypeptide: Hydroxymethylglutaryl-CoA lyase, mitochondrial (325 aa).

The transit peptide at 1-27 (MAAMRKALPRRLVGLASLRAVSTSSMG) directs the protein to the mitochondrion. One can recognise a Pyruvate carboxyltransferase domain in the interval 33-300 (VKIVEVGPRD…HTGVNLQKLL (268 aa)). Arginine 41 provides a ligand contact to substrate. A divalent metal cation is bound at residue aspartate 42. Lysine 48 is subject to N6-acetyllysine; alternate. An N6-succinyllysine; alternate modification is found at lysine 48. Position 111 is an N6-acetyllysine (lysine 111). An N6-acetyllysine; alternate mark is found at lysine 137 and lysine 179. Residues lysine 137 and lysine 179 each carry the N6-succinyllysine; alternate modification. A divalent metal cation is bound by residues histidine 233 and histidine 235. Cysteine 266 is a catalytic residue. Position 275 (asparagine 275) interacts with a divalent metal cation. The Microbody targeting signal motif lies at 323 to 325 (CKL). N6-acetyllysine is present on lysine 324.

This sequence belongs to the HMG-CoA lyase family. In terms of assembly, homodimer; disulfide-linked. Can also form homotetramers. A divalent metal cation is required as a cofactor. In terms of tissue distribution, highest expression in liver. Expressed in pancreas, kidney, intestine, testis, fibroblasts and lymphoblasts. Very low expression in brain and skeletal muscle. The relative expression of isoform 2 (at mRNA level) is highest in heart (30%), skeletal muscle (22%), and brain (14%).

The protein resides in the mitochondrion matrix. It is found in the peroxisome. The enzyme catalyses (3S)-3-hydroxy-3-methylglutaryl-CoA = acetoacetate + acetyl-CoA. Its pathway is metabolic intermediate metabolism; (S)-3-hydroxy-3-methylglutaryl-CoA degradation; acetoacetate from (S)-3-hydroxy-3-methylglutaryl-CoA: step 1/1. Stimulated by reducing agents such as dithiothreitol (DTT). Its function is as follows. Mitochondrial 3-hydroxy-3-methylglutaryl-CoA lyase that catalyzes a cation-dependent cleavage of (S)-3-hydroxy-3-methylglutaryl-CoA into acetyl-CoA and acetoacetate, a key step in ketogenesis. Terminal step in leucine catabolism. Ketone bodies (beta-hydroxybutyrate, acetoacetate and acetone) are essential as an alternative source of energy to glucose, as lipid precursors and as regulators of metabolism. The protein is Hydroxymethylglutaryl-CoA lyase, mitochondrial (HMGCL) of Homo sapiens (Human).